A 138-amino-acid polypeptide reads, in one-letter code: Holo-[acyl-carrier-protein] synthase (138 aa).

Positions 8 and 56 each coordinate Mg(2+).

It belongs to the P-Pant transferase superfamily. AcpS family. Requires Mg(2+) as cofactor.

It is found in the cytoplasm. It carries out the reaction apo-[ACP] + CoA = holo-[ACP] + adenosine 3',5'-bisphosphate + H(+). In terms of biological role, transfers the 4'-phosphopantetheine moiety from coenzyme A to a Ser of acyl-carrier-protein. The chain is Holo-[acyl-carrier-protein] synthase from Clostridium novyi (strain NT).